Reading from the N-terminus, the 394-residue chain is MTTTPTTTTHMVLITTIHMVLTTMIHMALTTMIHMAPTTMIHMALTTMIPTVLPTRRRALMVLTMTIRTAPATTMTLTVPTTMTLTVPTTMTLTVPTMTTLTVRQTRIRALTVPTMTILMALTMMIHMVLPTRRRVLMVPATTIRMVLTTMIHMVLTTMIHMALTTMIPTVLPTRRRALMVLTMTIRTAPATTMTLTVPTMTTLTVRQTRIRALTVLLATMILTDLPITTTLTVLPTRRRVLMVPTMTILMALTMMIHMVLPTRRRVLMVPATTIRMVLTTMIPTVLLTKRRVLMVPTTMIHTAPATTMTLTVPTMTTLTVPLIETRTPMGLPTTVHPTMMTLMVHLIEAVVINTVVTTITKFLDVFDKKNILLCLDLSMKILCMSCGYVSAGK.

Transmembrane regions (helical) follow at residues Leu-13–Ile-33, Met-35–Thr-55, Thr-73–Val-95, Ala-110–Leu-130, Ile-152–Leu-172, Leu-179–Val-198, Val-216–Pro-236, Val-241–Leu-261, Val-267–Leu-287, Val-293–Val-313, Met-340–Ile-360, and Ile-372–Ala-392.

It localises to the membrane. This is an uncharacterized protein from Saccharomyces cerevisiae (strain ATCC 204508 / S288c) (Baker's yeast).